The following is a 201-amino-acid chain: Small ribosomal subunit protein uS4c (201 aa).

The tract at residues 15–43 is disordered; the sequence is LGALPGLTRKRPRSGSDLRNQSRSGKRSQ. The S4 RNA-binding domain maps to 89–150; sequence MRLDNILFRL…EQRSRALIQN (62 aa).

Belongs to the universal ribosomal protein uS4 family. In terms of assembly, part of the 30S ribosomal subunit. Contacts protein S5. The interaction surface between S4 and S5 is involved in control of translational fidelity.

It localises to the plastid. Its subcellular location is the chloroplast. One of the primary rRNA binding proteins, it binds directly to 16S rRNA where it nucleates assembly of the body of the 30S subunit. Its function is as follows. With S5 and S12 plays an important role in translational accuracy. This is Small ribosomal subunit protein uS4c (rps4) from Drimys granadensis.